A 433-amino-acid polypeptide reads, in one-letter code: GTPase Obg (433 aa).

Residues 1–159 (MGLTDYCECR…LHVSLEIKYL (159 aa)) enclose the Obg domain. The OBG-type G domain occupies 160-329 (ANVGIVGFPN…LVAQVFALHQ (170 aa)). GTP contacts are provided by residues 166–173 (GFPNTGKS), 191–195 (FTTLV), 212–215 (DIPG), 282–285 (NKTD), and 310–312 (ISA). Mg(2+) is bound by residues Ser-173 and Thr-193. Residues 355–433 (ASETDHDPLN…FAGQEFVIND (79 aa)) enclose the OCT domain.

The protein belongs to the TRAFAC class OBG-HflX-like GTPase superfamily. OBG GTPase family. As to quaternary structure, monomer. Requires Mg(2+) as cofactor.

Its subcellular location is the cytoplasm. An essential GTPase which binds GTP, GDP and possibly (p)ppGpp with moderate affinity, with high nucleotide exchange rates and a fairly low GTP hydrolysis rate. Plays a role in control of the cell cycle, stress response, ribosome biogenesis and in those bacteria that undergo differentiation, in morphogenesis control. This chain is GTPase Obg, found in Mycoplasma pneumoniae (strain ATCC 29342 / M129 / Subtype 1) (Mycoplasmoides pneumoniae).